The sequence spans 205 residues: Proteasome subunit beta type-3 (205 aa).

Residue serine 2 is modified to N-acetylserine. An N6-acetyllysine modification is found at lysine 77.

Belongs to the peptidase T1B family. The 26S proteasome consists of a 20S proteasome core and two 19S regulatory subunits. The 20S proteasome core is a barrel-shaped complex made of 28 subunits that are arranged in four stacked rings. The two outer rings are each formed by seven alpha subunits, and the two inner rings are formed by seven beta subunits. The proteolytic activity is exerted by three beta-subunits PSMB5, PSMB6 and PSMB7. Detected in liver (at protein level).

It is found in the cytoplasm. The protein resides in the nucleus. Non-catalytic component of the 20S core proteasome complex involved in the proteolytic degradation of most intracellular proteins. This complex plays numerous essential roles within the cell by associating with different regulatory particles. Associated with two 19S regulatory particles, forms the 26S proteasome and thus participates in the ATP-dependent degradation of ubiquitinated proteins. The 26S proteasome plays a key role in the maintenance of protein homeostasis by removing misfolded or damaged proteins that could impair cellular functions, and by removing proteins whose functions are no longer required. Associated with the PA200 or PA28, the 20S proteasome mediates ubiquitin-independent protein degradation. This type of proteolysis is required in several pathways including spermatogenesis (20S-PA200 complex) or generation of a subset of MHC class I-presented antigenic peptides (20S-PA28 complex). The chain is Proteasome subunit beta type-3 (Psmb3) from Mus musculus (Mouse).